Reading from the N-terminus, the 247-residue chain is Trypsin-2 (247 aa).

An N-terminal signal peptide occupies residues 1–15 (MNLLLILTFVAAAVA). A propeptide spans 16 to 23 (APFDDDDK) (activation peptide). The Peptidase S1 domain occupies 24-244 (IVGGYICEEN…YVDWIKDTIA (221 aa)). Disulfide bonds link C30–C160, C48–C64, C171–C185, and C196–C220. The active-site Charge relay system is H63. Ca(2+) is bound by residues E75, N77, V80, and E85. The Charge relay system role is filled by D107. A Sulfotyrosine modification is found at Y154. The active-site Charge relay system is the S200.

The protein belongs to the peptidase S1 family. Requires Ca(2+) as cofactor. In terms of processing, sulfated on tyrosine. Post-translationally, sulfation at Tyr-154 increases selectivity towards basic versus apolar residues at the P2' position of inhibitors that bind in a substrate-like fashion. Although the increase in selectivity is relatively small, it may facilitate digestion of a broader range of dietary proteins. As to expression, expressed in Paneth cells, at the base of small intestinal crypts.

It is found in the secreted. The protein resides in the extracellular space. The enzyme catalyses Preferential cleavage: Arg-|-Xaa, Lys-|-Xaa.. Its function is as follows. In the ileum, may be involved in defensin processing, including DEFA5. The polypeptide is Trypsin-2 (PRSS2) (Homo sapiens (Human)).